A 956-amino-acid polypeptide reads, in one-letter code: Calsyntenin-3 (956 aa).

The signal sequence occupies residues 1–19 (MTLLLLPLLLASLLASCSC). Residues 1–30 (MTLLLLPLLLASLLASCSCNKANKHKPWIE) are Cytoplasmic-facing. The Extracellular segment spans residues 20 to 847 (NKANKHKPWI…SHRNSMIPSA (828 aa)). 2 Cadherin domains span residues 29 to 145 (IEAE…APVF) and 146 to 246 (VERL…KPSW). Positions 31–51 (AEYQGIVMENDNTVLLNPPLF) form an intramembrane region, helical. The Cytoplasmic portion of the chain corresponds to 52–71 (ALDKDAPLRYAGEICGFRLH). An intramembrane region (helical) is located at residues 72–94 (GSGVPFEAVILDKATGEGLIRAK). Over 95-151 (EPVDCEAQKEHTFTIQAYDCGEGPDGANTKKSHKATVHVRVNDVNEFAPVFVERLYR) the chain is Cytoplasmic. The helical intramembrane region spans 152-172 (AAVTEGKLYDRILRVEAIDGD). Residues 173–255 (CSPQYSQICY…WQGWNKRIEY (83 aa)) are Cytoplasmic-facing. Residues 256-276 (APGAGSLALFPGIRLETCDEP) form a helical membrane-spanning segment. The Lumenal portion of the chain corresponds to 277–364 (LWNIQATIEL…PLGGPSGLGS (88 aa)). Asparagine 299, asparagine 327, asparagine 347, asparagine 507, and asparagine 740 each carry an N-linked (GlcNAc...) asparagine glycan. The chain crosses the membrane as a helical span at residues 848–868 (ATLIIVVCVGFLVLMVVLGLV). Residues 869–956 (RIHSLHRRVS…RIIETPPHRY (88 aa)) are Cytoplasmic-facing. The interval 916–956 (QSCVTGAVGGQQEDEDSSDSEVADSPSSDERRIIETPPHRY) is disordered. A compositionally biased stretch (acidic residues) spans 927–937 (QEDEDSSDSEV). Over residues 943–956 (SDERRIIETPPHRY) the composition is skewed to basic and acidic residues.

It belongs to the calsyntenin family. In terms of assembly, interacts (via cadherin domains) with both alpha and beta isoforms of neurexins (NRXN1, NRXN2 and NRXN3). Directly interacts with APBA2. Forms a tripartite complex with APBA2 and APP. Interacts with low affinity with KLC1. Interacts with SLC23A2/SVCT2. As to quaternary structure, interacts with CIDEA; inhibiting the lipid transferase activity of CIDEA. Interacts with CIDEC; inhibiting the lipid transferase activity of CIDEC. Proteolytically processed under normal cellular conditions. A primary zeta-cleavage generates a large extracellular (soluble) N-terminal domain (sAlc) and a short C-terminal transmembrane fragment (CTF1). A secondary cleavage catalyzed by gamma-secretase within the transmembrane domain releases the beta-Alc-beta chain in the extracellular milieu and produces an intracellular fragment (AlcICD). This processing is strongly suppressed in the tripartite complex formed with APBA2 and APP, which seems to prevent the association with gamma-secretase. Post-translationally, ubiquitinated: endoplasmic reticulum-localized protein is ubiquitinated and degraded by the endoplasmic reticulum-associated degradation (ERAD) pathway. According to PubMed:12498782, expressed predominantly in the brain and in kidney. Low levels in heart, skeletal muscle, liver, placenta, pancreas and lung. According to PubMed:12972431, predominant expression in brain, and only marginal in kidney. In brain, present throughout all cortical layers, highest levels in GABAergic neurons (based on morphology and distribution pattern). As to expression, expression is restricted to adipose tissue, with high expression in multilocular thermogenic adipocytes (brown adipose tissue).

The protein localises to the postsynaptic cell membrane. The protein resides in the endoplasmic reticulum membrane. It is found in the golgi apparatus membrane. It localises to the cell projection. Its subcellular location is the dendrite. The protein localises to the lipid droplet. Postsynaptic adhesion molecule that binds to presynaptic neurexins to mediate both excitatory and inhibitory synapse formation. Promotes synapse development by acting as a cell adhesion molecule at the postsynaptic membrane, which associates with both neurexin-alpha and neurexin-beta proteins at the presynaptic membrane. Regulates the balance between excitatory and inhibitory synapses by inhibiting formation of excitatory parallel-fiber synapses and promoting formation of inhibitory synapses in the same neuron. May also be involved in ascorbate (vitamin C) uptake via its interaction with SLC23A2/SVCT2. Complex formation with APBA2 and APP, stabilizes APP metabolism and enhances APBA2-mediated suppression of beta-APP40 secretion, due to the retardation of intracellular APP maturation. In terms of biological role, adipose-specific isoform that plays a key role in adaptive thermogenesis. Facilitates the efficient use of stored triglyceride by promoting multilocular morphology of thermogenic adipocytes: acts by inhibiting the activity of CIDEA and CIDEC on lipid droplets, thereby preventing lipid droplet fusion and facilitating lipid utilization. May also participate in adaptive thermogenesis by promoting sympathetic innervation of thermogenic adipose tissue: acts by driving secretion of neurotrophic factor S100B from brown adipocytes, stimulating neurite outgrowth from sympathetic neurons. The sequence is that of Calsyntenin-3 from Homo sapiens (Human).